A 259-amino-acid polypeptide reads, in one-letter code: Protein unc-50 homolog (259 aa).

At M1 the chain carries N-acetylmethionine. A compositionally biased stretch (polar residues) spans 1-17 (MLPSTSVNSPAQGNGVL). The segment at 1 to 22 (MLPSTSVNSPAQGNGVLSSRDA) is disordered. Topologically, residues 1–82 (MLPSTSVNSP…TKDQWARDDP (82 aa)) are cytoplasmic. A Phosphoserine modification is found at S6. Residues 83–103 (AFLVLLSIWLCVSTIGFGFVL) traverse the membrane as a helical segment. Residues 104 to 115 (DMGFFETIKLLL) are Lumenal-facing. The chain crosses the membrane as a helical span at residues 116–136 (WVVFIDCVGVGLLISTLMWFI). At 137-163 (SNKYLVKRQSRDYDVEWGYAFDVHLNA) the chain is on the cytoplasmic side. Residues 164-184 (FYPLLVILHFIQLFFINHVIL) form a helical membrane-spanning segment. Residues 185-187 (TDT) lie on the Lumenal side of the membrane. The helical transmembrane segment at 188–208 (FIGYLVGNTLWLVAVGYYIYV) threads the bilayer. Over 209–222 (TFLGYSALPFLKNT) the chain is Cytoplasmic. Residues 223 to 243 (VILLYPFAPLILLYGLSLALG) form a helical membrane-spanning segment. Over 244–259 (WNFTHTLCSFYKYRVK) the chain is Lumenal.

Belongs to the unc-50 family.

The protein resides in the nucleus inner membrane. It is found in the golgi apparatus membrane. In terms of biological role, involved in the cell surface expression of neuronal nicotinic receptors. Binds RNA. This Bos taurus (Bovine) protein is Protein unc-50 homolog (UNC50).